A 406-amino-acid polypeptide reads, in one-letter code: Phosphopentomutase (406 aa).

Residues aspartate 10, aspartate 305, histidine 310, aspartate 346, histidine 347, and histidine 358 each coordinate Mn(2+).

This sequence belongs to the phosphopentomutase family. It depends on Mn(2+) as a cofactor.

Its subcellular location is the cytoplasm. The catalysed reaction is 2-deoxy-alpha-D-ribose 1-phosphate = 2-deoxy-D-ribose 5-phosphate. It carries out the reaction alpha-D-ribose 1-phosphate = D-ribose 5-phosphate. It functions in the pathway carbohydrate degradation; 2-deoxy-D-ribose 1-phosphate degradation; D-glyceraldehyde 3-phosphate and acetaldehyde from 2-deoxy-alpha-D-ribose 1-phosphate: step 1/2. Isomerase that catalyzes the conversion of deoxy-ribose 1-phosphate (dRib-1-P) and ribose 1-phosphate (Rib-1-P) to deoxy-ribose 5-phosphate (dRib-5-P) and ribose 5-phosphate (Rib-5-P), respectively. The protein is Phosphopentomutase of Agrobacterium fabrum (strain C58 / ATCC 33970) (Agrobacterium tumefaciens (strain C58)).